The chain runs to 220 residues: MFELRKLPYDTNAFGDFLSAETFSYHHGKHHNTYVTNLNNLIKDTEFAGKDLVSIIKTSNGGVFNNAAQVYNHDFYFDCIKPSTGCGCGGSCQSIDANLQAALEKEFGSLENFKAEFIKGATGVFGSGWFWLVYNTKNQKLEFVGTSNAATPITEDKVPLLVVDVWEHAYYVDHRNARPAYLEKFYAHINWEFVAKAYEWALKEGMGSVSFYANELHPVK.

Residues histidine 26, histidine 73, aspartate 164, and histidine 168 each contribute to the Fe cation site.

The protein belongs to the iron/manganese superoxide dismutase family. As to quaternary structure, homodimer. Requires Fe cation as cofactor.

It carries out the reaction 2 superoxide + 2 H(+) = H2O2 + O2. In terms of biological role, destroys superoxide anion radicals which are normally produced within the cells and which are toxic to biological systems. The sequence is that of Superoxide dismutase [Fe] (sodB) from Campylobacter jejuni subsp. jejuni serotype O:2 (strain ATCC 700819 / NCTC 11168).